The following is a 262-amino-acid chain: Type II pantothenate kinase (262 aa).

Residue 7–14 (DAGGSLVK) coordinates ATP. Glutamate 71 serves as the catalytic Proton acceptor. Residues threonine 101, 119–123 (GGLLT), and tyrosine 135 each bind ATP.

This sequence belongs to the type II pantothenate kinase family. Homodimer.

It is found in the cytoplasm. It carries out the reaction (R)-pantothenate + ATP = (R)-4'-phosphopantothenate + ADP + H(+). Its pathway is cofactor biosynthesis; coenzyme A biosynthesis; CoA from (R)-pantothenate: step 1/5. Functionally, catalyzes the phosphorylation of pantothenate (Pan), the first step in CoA biosynthesis. This is Type II pantothenate kinase from Oceanobacillus iheyensis (strain DSM 14371 / CIP 107618 / JCM 11309 / KCTC 3954 / HTE831).